Here is a 46-residue protein sequence, read N- to C-terminus: uncharacterized protein (46 aa).

This is an uncharacterized protein from Shigella flexneri.